Here is a 231-residue protein sequence, read N- to C-terminus: NADH-ubiquinone oxidoreductase chain 4 (231 aa).

6 consecutive transmembrane segments (helical) span residues 1–21 (PIAG…YGII), 34–54 (MFLP…LTCL), 63–85 (IAYS…TPWG), 89–111 (AMAL…NTTY), 118–138 (ILIL…WWLL), and 169–189 (TIIL…HMFL).

It belongs to the complex I subunit 4 family.

Its subcellular location is the mitochondrion membrane. The enzyme catalyses a ubiquinone + NADH + 5 H(+)(in) = a ubiquinol + NAD(+) + 4 H(+)(out). In terms of biological role, core subunit of the mitochondrial membrane respiratory chain NADH dehydrogenase (Complex I) that is believed to belong to the minimal assembly required for catalysis. Complex I functions in the transfer of electrons from NADH to the respiratory chain. The immediate electron acceptor for the enzyme is believed to be ubiquinone. The polypeptide is NADH-ubiquinone oxidoreductase chain 4 (MT-ND4) (Trimeresurus cantori (Cantor's pit viper)).